The sequence spans 348 residues: Serine/threonine-protein kinase SBK2 (348 aa).

Residues 1–25 (MPGKQSEEGPAEAGASEDSEEEGLG) are disordered. A Protein kinase domain is found at 62–330 (YEEVRPLGQG…IREHLGRPWR (269 aa)). ATP contacts are provided by residues 68–76 (LGQGCYGRV) and K91. D183 acts as the Proton acceptor in catalysis.

The protein belongs to the protein kinase superfamily. Ser/Thr protein kinase family. STKL subfamily.

It carries out the reaction L-seryl-[protein] + ATP = O-phospho-L-seryl-[protein] + ADP + H(+). The enzyme catalyses L-threonyl-[protein] + ATP = O-phospho-L-threonyl-[protein] + ADP + H(+). The polypeptide is Serine/threonine-protein kinase SBK2 (SBK2) (Homo sapiens (Human)).